A 953-amino-acid polypeptide reads, in one-letter code: UvrABC system protein A (953 aa).

An ATP-binding site is contributed by Gly33 to Ser40. 2 consecutive ABC transporter domains span residues Trp320 to Ile599 and Gly619 to Lys949. Gly652–Ser659 provides a ligand contact to ATP. Residues Cys752–Cys778 form a C4-type zinc finger.

It belongs to the ABC transporter superfamily. UvrA family. As to quaternary structure, forms a heterotetramer with UvrB during the search for lesions.

Its subcellular location is the cytoplasm. The UvrABC repair system catalyzes the recognition and processing of DNA lesions. UvrA is an ATPase and a DNA-binding protein. A damage recognition complex composed of 2 UvrA and 2 UvrB subunits scans DNA for abnormalities. When the presence of a lesion has been verified by UvrB, the UvrA molecules dissociate. The protein is UvrABC system protein A of Rickettsia prowazekii (strain Madrid E).